The chain runs to 301 residues: Mitochondrial substrate carrier family protein X (301 aa).

At 1–23 (MVQQQQQQQQIKKNQVKPPLYSN) the chain is on the mitochondrial intermembrane side. Solcar repeat units lie at residues 18 to 109 (PPLY…FRTR), 117 to 199 (IKLW…MKHN), and 208 to 296 (IGLP…QKSF). Residues 24–44 (LIAGAIAGVIGSSVVFPLDFV) traverse the membrane as a helical segment. Over 45 to 75 (KTRLQQQRVSIDGSKQYNGIIDCFKKVIKNE) the chain is Mitochondrial matrix. A helical transmembrane segment spans residues 76 to 97 (GGVRGLYRGLSSNLIGIIPEKA). Topologically, residues 98–122 (LKLAMNDYFRTRFQGDRSYIKLWEE) are mitochondrial intermembrane. The chain crosses the membrane as a helical span at residues 123-143 (VASGGLAGMCQVVATNPMELV). The Mitochondrial matrix portion of the chain corresponds to 144-173 (KIRMQVSGLSGKKASLKEVVSELGIKGLYK). Residues 174 to 194 (GTASTLLRDVPFSMIYFSIYG) traverse the membrane as a helical segment. At 195–207 (RMKHNLTDQETGE) the chain is on the mitochondrial intermembrane side. A helical transmembrane segment spans residues 208 to 228 (IGLPKILLCGITAGSIAASVS). Residues 229 to 271 (TPFDVIKTRIQVKPGPNDPHYKGIADCFRKTIQSEGPKALFKG) are Mitochondrial matrix-facing. A helical transmembrane segment spans residues 272-292 (VLPRVCIISPLFGITLVVYEI). Residues 293–301 (QKSFYASTH) lie on the Mitochondrial intermembrane side of the membrane.

The protein belongs to the mitochondrial carrier (TC 2.A.29) family.

Its subcellular location is the mitochondrion inner membrane. Its function is as follows. Mitochondrial solute carriers shuttle metabolites, nucleotides, and cofactors through the mitochondrial inner membrane. In Dictyostelium discoideum (Social amoeba), this protein is Mitochondrial substrate carrier family protein X (mcfX).